Here is a 203-residue protein sequence, read N- to C-terminus: Endo-type membrane-bound lytic murein transglycosylase A (203 aa).

Positions 1–15 (MKLRWLMWLVVFLAG) are cleaved as a signal peptide. Cys-16 is lipidated: N-palmitoyl cysteine. Cys-16 is lipidated: S-diacylglycerol cysteine.

This sequence belongs to the transglycosylase Slt family.

The protein resides in the cell outer membrane. It carries out the reaction Endolytic cleavage of the (1-&gt;4)-beta-glycosidic linkage between N-acetylmuramic acid (MurNAc) and N-acetylglucosamine (GlcNAc) residues in peptidoglycan with concomitant formation of a 1,6-anhydrobond in the MurNAc residue.. Murein-degrading enzyme. May play a role in recycling of muropeptides during cell elongation and/or cell division. Preferentially cleaves at a distance of more than two disaccharide units from the ends of the glycan chain. The chain is Endo-type membrane-bound lytic murein transglycosylase A from Cronobacter sakazakii (strain ATCC BAA-894) (Enterobacter sakazakii).